The primary structure comprises 122 residues: Small ribosomal subunit protein uS12c (122 aa).

Belongs to the universal ribosomal protein uS12 family. Part of the 30S ribosomal subunit.

The protein localises to the plastid. The protein resides in the chloroplast. In terms of biological role, with S4 and S5 plays an important role in translational accuracy. Located at the interface of the 30S and 50S subunits. This Illicium oligandrum (Star anise) protein is Small ribosomal subunit protein uS12c (rps12).